The following is an 849-amino-acid chain: Coiled-coil domain-containing protein 87 (849 aa).

Residues 387-415 (RHPAAGHRLEELEKMLRNLQEEEASGQWD) are a coiled coil.

The protein belongs to the CCDC87 family.

Its function is as follows. Plays a role in spermatogenesis, where it is important for normal sperm head morphology. Also required for the acrosome reaction and thus normal male fertility. This Homo sapiens (Human) protein is Coiled-coil domain-containing protein 87 (CCDC87).